A 264-amino-acid chain; its full sequence is Ribonuclease HII (264 aa).

The 195-residue stretch at 69–263 (KVVCGIDEVG…EENAKTITKP (195 aa)) folds into the RNase H type-2 domain. The a divalent metal cation site is built by Asp-75, Glu-76, and Asp-166.

Belongs to the RNase HII family. Requires Mn(2+) as cofactor. It depends on Mg(2+) as a cofactor.

It is found in the cytoplasm. It carries out the reaction Endonucleolytic cleavage to 5'-phosphomonoester.. Endonuclease that specifically degrades the RNA of RNA-DNA hybrids. This chain is Ribonuclease HII, found in Macrococcus caseolyticus (strain JCSC5402) (Macrococcoides caseolyticum).